Reading from the N-terminus, the 421-residue chain is Phosphoribosylamine--glycine ligase (421 aa).

The ATP-grasp domain occupies 108–314 (KEIMVKYNVP…FAQNIDDIMM (207 aa)). Residue 134–195 (IEEQGAPIVV…EEFLDGEEFS (62 aa)) coordinates ATP. Residues glutamate 284 and asparagine 286 each coordinate Mg(2+).

Belongs to the GARS family. Mg(2+) serves as cofactor. It depends on Mn(2+) as a cofactor.

It catalyses the reaction 5-phospho-beta-D-ribosylamine + glycine + ATP = N(1)-(5-phospho-beta-D-ribosyl)glycinamide + ADP + phosphate + H(+). It participates in purine metabolism; IMP biosynthesis via de novo pathway; N(1)-(5-phospho-D-ribosyl)glycinamide from 5-phospho-alpha-D-ribose 1-diphosphate: step 2/2. The protein is Phosphoribosylamine--glycine ligase of Streptococcus pyogenes serotype M18 (strain MGAS8232).